We begin with the raw amino-acid sequence, 155 residues long: Ribosomal RNA large subunit methyltransferase H (155 aa).

Residues Leu72, Gly103, and 122–127 each bind S-adenosyl-L-methionine; that span reads LSALTL.

This sequence belongs to the RNA methyltransferase RlmH family. In terms of assembly, homodimer.

It localises to the cytoplasm. It catalyses the reaction pseudouridine(1915) in 23S rRNA + S-adenosyl-L-methionine = N(3)-methylpseudouridine(1915) in 23S rRNA + S-adenosyl-L-homocysteine + H(+). Functionally, specifically methylates the pseudouridine at position 1915 (m3Psi1915) in 23S rRNA. This chain is Ribosomal RNA large subunit methyltransferase H, found in Salmonella choleraesuis (strain SC-B67).